Consider the following 302-residue polypeptide: uncharacterized protein (302 aa).

The first 22 residues, 1–22 (MLVVFKRLGFIVSIFSLTFLSA), serve as a signal peptide directing secretion. Cys23 is lipidated: N-palmitoyl cysteine. Cys23 is lipidated: S-diacylglycerol cysteine.

The protein belongs to the MG067/MG068/MG395 family.

It localises to the cell membrane. This is an uncharacterized protein from Mycoplasma pneumoniae (strain ATCC 29342 / M129 / Subtype 1) (Mycoplasmoides pneumoniae).